We begin with the raw amino-acid sequence, 483 residues long: Glutamyl-tRNA(Gln) amidotransferase subunit A (483 aa).

Residues lysine 76 and serine 151 each act as charge relay system in the active site. The Acyl-ester intermediate role is filled by serine 175.

This sequence belongs to the amidase family. GatA subfamily. Heterotrimer of A, B and C subunits.

It catalyses the reaction L-glutamyl-tRNA(Gln) + L-glutamine + ATP + H2O = L-glutaminyl-tRNA(Gln) + L-glutamate + ADP + phosphate + H(+). Its function is as follows. Allows the formation of correctly charged Gln-tRNA(Gln) through the transamidation of misacylated Glu-tRNA(Gln) in organisms which lack glutaminyl-tRNA synthetase. The reaction takes place in the presence of glutamine and ATP through an activated gamma-phospho-Glu-tRNA(Gln). This is Glutamyl-tRNA(Gln) amidotransferase subunit A from Nitrosococcus oceani (strain ATCC 19707 / BCRC 17464 / JCM 30415 / NCIMB 11848 / C-107).